The sequence spans 238 residues: IkB-like protein (238 aa).

ANK repeat units follow at residues 48–80 (GSSV…IINH), 87–118 (GNSA…TRIC), 124–153 (GMTP…PTQK), and 158–187 (GFTA…PLYM). The Nuclear localization signal signature appears at 80-86 (HHRRDND). The Nuclear localization signal motif lies at 202–213 (KKKPKIIITGCK). The PxIxITxC motif; Interaction with host PPP3CA signature appears at 205 to 212 (PKIIITGC). The short motif at 227 to 230 (FLCV) is the FLCV motif element.

It belongs to the asfivirus A238L family. As to quaternary structure, interacts with host PPIA. Interacts with host PPP3CA/Calcineurin. Interacts with host RELA/p65; interaction of the 32 kDa form with host RELA results in the formation of a stable complex with NF-kappa-B. Interacts with host PPP3R1. Interacts with host EP300; this interaction inhibits the association of host EP300 with host RELA, JUN and NFATC2. The protein exists in a 28 kDa and a 32 kDa form, probably due to post-translational modifications which are neither phosphorylation, nor sumoylation.

Its subcellular location is the host nucleus. It localises to the host cytoplasm. IkB-like protein that inhibits the binding of NF-kappa-B to DNA, thereby downregulating pro-inflammatory cytokine production. Forms a heterodimer with the NF-kappa-B subunit RELA/p65 and prevents the activation of the NF-kappa-B transcription factor. Inhibits calcineurin function, which is required for the induction of nuclear factor of activated T cells (NFAT)-dependent immune response genes. Prevents the binding of substrates to calcineurin without affecting the phosphatase activity. Does not contain the serine residues that are phosphorylated by host IkB kinase and thus is not degraded following stimulation of the NFkB pathway. The polypeptide is IkB-like protein (A238L) (Ornithodoros (relapsing fever ticks)).